The following is a 327-amino-acid chain: MADTLDLGSSAFGCKGSSPFLRTTMIGQPCVDFFFFFFFFFKKKKKKMITFLYKPKKISSAKFLRQWSKTNLIKKAGHAGTLDPLASGLLLVATEDDTKLLQYLDQKTKTYLAKIQFGFWSTTYDAEGQIYGVEQPIKVTKDNLEQALNRLSESQKQVPPVFSSKKVSGKSAYHYARQGKQIELKPISIKISKTILINFDEKLQNCVIMWQVSRGCYIRSLADDLGKMLKTRAYLSDLERTKIGNFDKKFLNQSLKPQDLFDLQQVKLDLENLELLLQGKKINYFAKNSELNTLIFKDEVVGFGKIINNVLITKKLFGNRIKKIINT.

The Nucleophile role is filled by Asp83.

It belongs to the pseudouridine synthase TruB family. Type 1 subfamily.

It catalyses the reaction uridine(55) in tRNA = pseudouridine(55) in tRNA. In terms of biological role, responsible for synthesis of pseudouridine from uracil-55 in the psi GC loop of transfer RNAs. The polypeptide is tRNA pseudouridine synthase B (Mesomycoplasma hyopneumoniae (strain 232) (Mycoplasma hyopneumoniae)).